The chain runs to 177 residues: Isopentenyl-diphosphate Delta-isomerase (177 aa).

Residues H22 and H28 each contribute to the Mn(2+) site. Residues 26–160 (LRHMAISVFV…PERFTPWLRI (135 aa)) enclose the Nudix hydrolase domain. The active site involves C62. Residue H64 coordinates Mn(2+). E82 provides a ligand contact to Mg(2+). Mn(2+) contacts are provided by E108 and E110. E110 is a catalytic residue.

It belongs to the IPP isomerase type 1 family. Mg(2+) is required as a cofactor. It depends on Mn(2+) as a cofactor.

The protein resides in the cytoplasm. It carries out the reaction isopentenyl diphosphate = dimethylallyl diphosphate. Its pathway is isoprenoid biosynthesis; dimethylallyl diphosphate biosynthesis; dimethylallyl diphosphate from isopentenyl diphosphate: step 1/1. It participates in porphyrin-containing compound metabolism; chlorophyll biosynthesis. Its function is as follows. Catalyzes the 1,3-allylic rearrangement of the homoallylic substrate isopentenyl (IPP) to its highly electrophilic allylic isomer, dimethylallyl diphosphate (DMAPP). The protein is Isopentenyl-diphosphate Delta-isomerase of Cereibacter sphaeroides (strain KD131 / KCTC 12085) (Rhodobacter sphaeroides).